We begin with the raw amino-acid sequence, 634 residues long: DNA mismatch repair protein MutL (634 aa).

The segment at 406–427 (HTHHNDTKGSVHTKSFSARSSS) is disordered.

This sequence belongs to the DNA mismatch repair MutL/HexB family.

In terms of biological role, this protein is involved in the repair of mismatches in DNA. It is required for dam-dependent methyl-directed DNA mismatch repair. May act as a 'molecular matchmaker', a protein that promotes the formation of a stable complex between two or more DNA-binding proteins in an ATP-dependent manner without itself being part of a final effector complex. This is DNA mismatch repair protein MutL from Anaplasma phagocytophilum (strain HZ).